The sequence spans 822 residues: LPS-assembly protein LptD (822 aa).

The first 37 residues, 1-37 (MRRASRSPFILSPVAHAVSRLVLCATLGWTYAGSGHA), serve as a signal peptide directing secretion. The segment at 38 to 97 (QVPAPAGGSEVPLGARPPASAPVAAQQETPLKLKSSPALAEEVPNGPGDEGPTFVFGDSV) is disordered.

Belongs to the LptD family. As to quaternary structure, component of the lipopolysaccharide transport and assembly complex. Interacts with LptE and LptA.

The protein localises to the cell outer membrane. In terms of biological role, together with LptE, is involved in the assembly of lipopolysaccharide (LPS) at the surface of the outer membrane. The chain is LPS-assembly protein LptD from Polaromonas sp. (strain JS666 / ATCC BAA-500).